The chain runs to 518 residues: Protein MGF 505-6R (518 aa).

ANK repeat units lie at residues 54-83 (SIND…NLHY), 129-158 (ECDF…LLNV), 261-290 (SVNR…IPRG), 292-322 (IERL…KVKN), and 324-351 (KKLV…NLVD).

The protein belongs to the asfivirus MGF 505 family.

Plays a role in virus cell tropism, and may be required for efficient virus replication in macrophages. The protein is Protein MGF 505-6R of Ornithodoros (relapsing fever ticks).